The sequence spans 865 residues: Envelope glycoprotein B (865 aa).

The N-terminal stretch at 1–21 (MHYFRRNCIFFLIVILYGTNS) is a signal peptide. Over 22–731 (SPSTQNVTSR…SGVSAFMSNP (710 aa)) the chain is Virion surface. The N-linked (GlcNAc...) asparagine; by host glycan is linked to Asn-27. Disulfide bonds link Cys-49/Cys-530, Cys-66/Cys-486, Cys-140/Cys-204, Cys-298/Cys-346, and Cys-553/Cys-590. Residues 106-112 (TWTGTTY) form an involved in fusion and/or binding to host membrane region. N-linked (GlcNAc...) asparagine; by host glycosylation is present at Asn-184. The tract at residues 191-198 (GSPWIYRT) is involved in fusion and/or binding to host membrane. N-linked (GlcNAc...) asparagine; by host glycans are attached at residues Asn-332, Asn-364, Asn-406, and Asn-425. The N-linked (GlcNAc...) asparagine; by host glycan is linked to Asn-631. Hydrophobic membrane proximal region regions lie at residues 676–729 (INKV…AFMS) and 683–729 (DTNY…AFMS). The helical transmembrane segment at 732-752 (FGALAIGLIIIAGLVAAFLAY) threads the bilayer. At 753–865 (RYVNKLKSNP…TYSDSEDDAV (113 aa)) the chain is on the intravirion side. The short motif at 809 to 812 (YMAL) is the Golgi targeting element. The disordered stretch occupies residues 843–865 (IKNSNPKYDKLPTTYSDSEDDAV). Positions 850 to 853 (YDKL) match the Internalization motif motif.

The protein belongs to the herpesviridae glycoprotein B family. Homotrimer; disulfide-linked. Binds to heparan sulfate proteoglycans. Interacts with gH/gL heterodimer. In terms of processing, a proteolytic cleavage by host furin generates two subunits that remain linked by disulfide bonds.

It is found in the virion membrane. The protein localises to the host cell membrane. Its subcellular location is the host endosome membrane. It localises to the host Golgi apparatus membrane. In terms of biological role, envelope glycoprotein that forms spikes at the surface of virion envelope. Essential for the initial attachment to heparan sulfate moieties of the host cell surface proteoglycans. Involved in fusion of viral and cellular membranes leading to virus entry into the host cell. Following initial binding to its host receptors, membrane fusion is mediated by the fusion machinery composed at least of gB and the heterodimer gH/gL. May be involved in the fusion between the virion envelope and the outer nuclear membrane during virion egress. The protein is Envelope glycoprotein B of Gallid herpesvirus 2 (strain Chicken/Md5/ATCC VR-987) (GaHV-2).